Reading from the N-terminus, the 419-residue chain is Alpha-galactosidase A (419 aa).

The N-terminal stretch at 1–31 (MKLLSRDTRLVCELALCPLALVFWSILGVRA) is a signal peptide. 2 disulfide bridges follow: Cys52–Cys94 and Cys56–Cys63. N-linked (GlcNAc...) asparagine glycosylation occurs at Asn139. A disulfide bridge connects residues Cys142 and Cys172. The active-site Nucleophile is the Asp170. Tyr186 carries the post-translational modification Phosphotyrosine. Asn192 carries an N-linked (GlcNAc...) asparagine glycan. Cys202 and Cys223 are joined by a disulfide. Substrate is bound at residue 203-207 (EWPLY). N-linked (GlcNAc...) asparagine glycosylation occurs at Asn215. The active-site Proton donor is the Asp231. Cysteines 378 and 382 form a disulfide.

This sequence belongs to the glycosyl hydrolase 27 family. As to quaternary structure, homodimer.

It localises to the lysosome. The enzyme catalyses Hydrolysis of terminal, non-reducing alpha-D-galactose residues in alpha-D-galactosides, including galactose oligosaccharides, galactomannans and galactolipids.. It carries out the reaction a globoside Gb3Cer (d18:1(4E)) + H2O = a beta-D-Gal-(1-&gt;4)-beta-D-Glc-(1&lt;-&gt;1)-Cer(d18:1(4E)) + D-galactose. The catalysed reaction is a globoside Gb3Cer + H2O = a beta-D-galactosyl-(1-&gt;4)-beta-D-glucosyl-(1&lt;-&gt;1)-ceramide + D-galactose. With respect to regulation, galactosylgalactosylglucosylceramidase activity is stimulated by saposin B and ammonium chloride. Its function is as follows. Catalyzes the hydrolysis of glycosphingolipids and participates in their degradation in the lysosome. The protein is Alpha-galactosidase A of Mus musculus (Mouse).